The primary structure comprises 944 residues: Translation factor GUF1 homolog, mitochondrial (944 aa).

Residues 201-379 (KNVRNFCILA…IITDIPYPPI (179 aa)) enclose the tr-type G domain. Residues 210–217 (AHIDSGKS), 271–275 (DTPGH), and 325–328 (NKID) contribute to the GTP site.

This sequence belongs to the TRAFAC class translation factor GTPase superfamily. Classic translation factor GTPase family. LepA subfamily.

The protein localises to the mitochondrion inner membrane. The catalysed reaction is GTP + H2O = GDP + phosphate + H(+). Its function is as follows. Promotes mitochondrial protein synthesis. May act as a fidelity factor of the translation reaction, by catalyzing a one-codon backward translocation of tRNAs on improperly translocated ribosomes. Binds to mitochondrial ribosomes in a GTP-dependent manner. This is Translation factor GUF1 homolog, mitochondrial from Plasmodium yoelii yoelii.